A 99-amino-acid polypeptide reads, in one-letter code: Small ribosomal subunit protein bS20 (99 aa).

It belongs to the bacterial ribosomal protein bS20 family.

In terms of biological role, binds directly to 16S ribosomal RNA. This is Small ribosomal subunit protein bS20 from Cyanothece sp. (strain PCC 7425 / ATCC 29141).